Reading from the N-terminus, the 154-residue chain is UPF0178 protein YaiI (154 aa).

It belongs to the UPF0178 family.

The chain is UPF0178 protein YaiI from Escherichia fergusonii (strain ATCC 35469 / DSM 13698 / CCUG 18766 / IAM 14443 / JCM 21226 / LMG 7866 / NBRC 102419 / NCTC 12128 / CDC 0568-73).